A 464-amino-acid polypeptide reads, in one-letter code: C-terminal processing peptidase, chloroplastic (464 aa).

The transit peptide at 1–32 (MHSRTNCLQTSVRAPQPHFRPFTAVKTCRQRC) directs the protein to the chloroplast. Residues 33–77 (STTAAAAKRDQAQEQQPWIQVGLGLAAAATAVAVGLGAAALPAQA) constitute a thylakoid transit peptide. The PDZ domain maps to 149–234 (LAALRRGTAG…SQVEVVLHAP (86 aa)). Active-site charge relay system residues include S372 and K397.

This sequence belongs to the peptidase S41A family. In terms of assembly, monomer.

The protein resides in the plastid. Its subcellular location is the chloroplast thylakoid lumen. It catalyses the reaction The enzyme shows specific recognition of a C-terminal tripeptide, Xaa-Yaa-Zaa, in which Xaa is preferably Ala or Leu, Yaa is preferably Ala or Tyr, and Zaa is preferably Ala, but then cleaves at a variable distance from the C-terminus. A typical cleavage is -Ala-Ala-|-Arg-Ala-Ala-Lys-Glu-Asn-Tyr-Ala-Leu-Ala-Ala.. Its activity is regulated as follows. Not inhibited by antipain, 4-amidinophenylmethanesulfonyl fluoride, aprotinin, chymostatin, 3,4-dichloroisocoumarin, diisopropyl fluorophosphate, E64, EDTA, EGTA, iodoacetamide, leupeptin, pepstatin, o-phenanthroline, N-ethylmaleimide, phosphoramidon or phenylmethylsulfonyl fluoride. In terms of biological role, protease involved in the C-terminal processing of the chloroplastic D1 protein of photosystem II. This proteolytic processing is necessary to allow the light-driven assembly of the tetranuclear manganese cluster, which is responsible for photosynthetic water oxidation. This Tetradesmus obliquus (Green alga) protein is C-terminal processing peptidase, chloroplastic (ctpA).